Here is an 82-residue protein sequence, read N- to C-terminus: MKFFLFFVILLAMEPVISGKHHILRCMGNTGICRPSCRKTEQPYLYCLNYQSCCLQSYMRISISGREEKDDWSQQNRWPKIS.

A signal peptide spans 1-19; the sequence is MKFFLFFVILLAMEPVISG. Intrachain disulfides connect cysteine 26–cysteine 53, cysteine 33–cysteine 47, and cysteine 37–cysteine 54.

This sequence belongs to the beta-defensin family.

It is found in the secreted. Has antibacterial activity. The sequence is that of Beta-defensin 119 (DEFB119) from Canis lupus familiaris (Dog).